The chain runs to 635 residues: MDGSCDCIEPLWQADDLLVKYQYISDFFIALAYFSIPLELIYFVKKSAFFPYRWVLIQFGAFIVLCGATHLINLWTFAIYTKTIAVVLTVAKAATAVVSCITALMLVHIIPDLLNVKLRERFLKDKADELDREMGIIRTQEETGRHVHMLTHEIRSTLDRHTILRTTLVELGRTLALAECALWMPTRSGSALQLSHTIYNSAAIGSVVPINLPIVSKVFNSNRVVKIPHTSPLASITADKSRYVPPEVVAIRVPLLHLTNFQINDWPELSAKSFAVMVLMLPPDSAREWRPHERELVEVVADQVAVALSHAAILEESMRARDLLMEQNIALDAARREAEMAICARNDFLAVMNHEMRTPMRAIVSLSSLLLETNLSAEQRLMVETILKSSDLLATLTNDVLDVSKLENGSLELEIAPFNLHSTFTDVVNLIKPVAACKRLSVVVTLAPELPLHAIGDQKRLMQIILNVAGNSIKFTKEGHVSITASMARPDALRGPHEPDYHPVVSDGFFYLAVQVKDTGCGISPQDMPHTFRKFAHPENAGKWNSGSGLGLALSRRFVSLMEGNIWLESEGVGKGCTAMFFVKLGMPEKPNANLRRMAPHPLQPNQGAGGPDALSISIMDSNPRVPRVRYQSSV.

Helical transmembrane passes span Ile-24–Val-44, Phe-59–Ile-79, and Ala-94–Leu-114. Cys-66 and His-70 together coordinate Cu cation. One can recognise a GAF domain in the interval Asp-159–Leu-308. The region spanning Val-351–Glu-589 is the Histidine kinase domain. His-354 is subject to Phosphohistidine; by autocatalysis.

It belongs to the ethylene receptor family. As to quaternary structure, homodimer. Cu cation serves as cofactor. In terms of tissue distribution, expressed in anthers and hulls.

It localises to the endoplasmic reticulum membrane. The catalysed reaction is ATP + protein L-histidine = ADP + protein N-phospho-L-histidine.. Its function is as follows. Ethylene receptor related to bacterial two-component regulators. Acts as a negative regulator of ethylene signaling. May play a role in the regulation of flowering by up-regulating GI (GIGANTEA) and RCN1 and regulate starch accumulation by down-regulating the alpha-amylase AMY3D. In Oryza sativa subsp. indica (Rice), this protein is Probable ethylene response sensor 2.